The primary structure comprises 403 residues: MQSIKRTLLLLGAVLPAVLAGPIFPHRRAPTTIPGKYIVTFKSDVDQAAIDKHTAWATDIHKRNLQRRDSSEEDLPIGIERNFKINKFAAYSGSFDEDTIAQIRQSDEVAAVEEDQVWHLFDLTTQSDAPWGLGSISHKGQPSTDYIYDTNGGEGTYAYVVDIGINVDHEEFEGRASLAYHAAGGQHVDGVGHGTHVSGTIGGKTYGVAKKANLLSVKVFVGESSSTSIILDGFNWAANDIVSKKRTGKAAINMSLGGGYSKAFNDAVENAFNEGVLSIVAAGNENTDASRTSPASAPDAFTVAAINVNNTRAYFSNYGSVVDIFAPGQNILSAWIGSNTATNTISGTSMATPHIVGLSIYLMSLEVLSSPKAVSDRIKELATRGVVSNVAGSPNLLAYNGNA.

The N-terminal stretch at 1-21 (MQSIKRTLLLLGAVLPAVLAG) is a signal peptide. Residues 22–121 (PIFPHRRAPT…VEEDQVWHLF (100 aa)) constitute a propeptide that is removed on maturation. In terms of domain architecture, Inhibitor I9 spans 36-120 (KYIVTFKSDV…AVEEDQVWHL (85 aa)). Positions 130 to 403 (PWGLGSISHK…PNLLAYNGNA (274 aa)) constitute a Peptidase S8 domain. Residues Asp-162 and His-193 each act as charge relay system in the active site. N-linked (GlcNAc...) asparagine glycans are attached at residues Asn-253 and Asn-309. Residue Ser-349 is the Charge relay system of the active site.

It belongs to the peptidase S8 family.

It localises to the secreted. The catalysed reaction is Hydrolysis of proteins with broad specificity, and of Bz-Arg-OEt &gt; Ac-Tyr-OEt. Does not hydrolyze peptide amides.. Functionally, secreted alkaline protease that allows assimilation of proteinaceous substrates. The polypeptide is Alkaline protease 1 (alp1) (Aspergillus flavus).